We begin with the raw amino-acid sequence, 410 residues long: Adenosine receptor A2a (410 aa).

The Extracellular portion of the chain corresponds to 1 to 4 (MGSS). The helical transmembrane segment at 5-29 (VYITVELAIAVLAILGNVLVCWAVW) threads the bilayer. Residues 30–39 (INSNLQNVTN) are Cytoplasmic-facing. The chain crosses the membrane as a helical span at residues 40 to 63 (FFVVSLAAADIAVGVLAIPFAITI). The Extracellular segment spans residues 64 to 74 (STGFCAACHGC). Intrachain disulfides connect C68–C154, C71–C143, and C74–C161. A helical transmembrane segment spans residues 75–97 (LFFACFVLVLTQSSIFSLLAIAI). The Cytoplasmic segment spans residues 98–117 (DRYIAIRIPLRYNGLVTGVR). The chain crosses the membrane as a helical span at residues 118–140 (AKGIIAICWVLSFAIGLTPMLGW). At 141–168 (NNCSQKDGNSTKTCGEGRVTCLFEDVVP) the chain is on the extracellular side. N-linked (GlcNAc...) asparagine glycosylation is found at N142 and N149. E164 is a binding site for adenosine. Residues 169 to 193 (MNYMVYYNFFAFVLLPLLLMLAIYL) traverse the membrane as a helical segment. Residues 194–229 (RIFLAARRQLKQMESQPLPGERTRSTLQKEVHAAKS) lie on the Cytoplasmic side of the membrane. The chain crosses the membrane as a helical span at residues 230–253 (LAIIVGLFALCWLPLHIINCFTFF). N248 lines the adenosine pocket. A disulfide bridge links C254 with C257. Topologically, residues 254 to 261 (CSTCRHAP) are extracellular. The helical transmembrane segment at 262–285 (PWLMYLAIILSHSNSVVNPFIYAY) threads the bilayer. Adenosine-binding residues include S272 and H273. The Cytoplasmic segment spans residues 286-410 (RIREFRQTFR…SSWSSEFAPS (125 aa)). The segment at 322 to 410 (HSTEGEQVSL…SSWSSEFAPS (89 aa)) is interaction with GAS2L2. The disordered stretch occupies residues 344–410 (GSATHSGRRP…SSWSSEFAPS (67 aa)). Over residues 371–388 (RDVELPTQERQEGQEHPG) the composition is skewed to basic and acidic residues. The segment covering 401-410 (SSWSSEFAPS) has biased composition (polar residues).

Belongs to the G-protein coupled receptor 1 family. Interacts (via cytoplasmic C-terminal domain) with USP4; the interaction is direct. May interact with DRD4. Interacts with NECAB2. Interacts (via cytoplasmic C-terminal domain) with GAS2L2; interaction enhances receptor-mediated adenylyl cyclase activity. In terms of processing, ubiquitinated. Deubiquitinated by USP4; leading to stabilization and expression at the cell surface. In terms of tissue distribution, expressed in striatal neurons (at protein level).

Its subcellular location is the cell membrane. Its function is as follows. Receptor for adenosine. The activity of this receptor is mediated by G proteins which activate adenylyl cyclase. The protein is Adenosine receptor A2a (Adora2a) of Rattus norvegicus (Rat).